The sequence spans 199 residues: 7-methyl-GTP pyrophosphatase (199 aa).

D76 (proton acceptor) is an active-site residue.

It belongs to the Maf family. YceF subfamily. Requires a divalent metal cation as cofactor.

It localises to the cytoplasm. It carries out the reaction N(7)-methyl-GTP + H2O = N(7)-methyl-GMP + diphosphate + H(+). Functionally, nucleoside triphosphate pyrophosphatase that hydrolyzes 7-methyl-GTP (m(7)GTP). May have a dual role in cell division arrest and in preventing the incorporation of modified nucleotides into cellular nucleic acids. This chain is 7-methyl-GTP pyrophosphatase, found in Nitrosococcus oceani (strain ATCC 19707 / BCRC 17464 / JCM 30415 / NCIMB 11848 / C-107).